Consider the following 200-residue polypeptide: GTP cyclohydrolase-2 (200 aa).

49 to 53 (RIHSE) is a binding site for GTP. The Zn(2+) site is built by C54, C65, and C67. GTP contacts are provided by residues Q70, 92 to 94 (EGR), and T114. D126 functions as the Proton acceptor in the catalytic mechanism. Residue R128 is the Nucleophile of the active site. The GTP site is built by T149 and K154.

The protein belongs to the GTP cyclohydrolase II family. Zn(2+) serves as cofactor.

The enzyme catalyses GTP + 4 H2O = 2,5-diamino-6-hydroxy-4-(5-phosphoribosylamino)-pyrimidine + formate + 2 phosphate + 3 H(+). It functions in the pathway cofactor biosynthesis; riboflavin biosynthesis; 5-amino-6-(D-ribitylamino)uracil from GTP: step 1/4. In terms of biological role, catalyzes the conversion of GTP to 2,5-diamino-6-ribosylamino-4(3H)-pyrimidinone 5'-phosphate (DARP), formate and pyrophosphate. The chain is GTP cyclohydrolase-2 from Saccharophagus degradans (strain 2-40 / ATCC 43961 / DSM 17024).